Reading from the N-terminus, the 157-residue chain is Small heat shock protein ibp (157 aa).

Positions 35-148 (EKPISDTPTY…KPKKISINVP (114 aa)) constitute a sHSP domain.

It belongs to the small heat shock protein (HSP20) family.

This Buchnera aphidicola subsp. Acyrthosiphon pisum (strain APS) (Acyrthosiphon pisum symbiotic bacterium) protein is Small heat shock protein ibp (ibp).